Consider the following 76-residue polypeptide: Conotoxin Lt6.1 (76 aa).

The N-terminal stretch at 1 to 22 is a signal peptide; that stretch reads MKLTCVLIIAVLFLMDNQLITA. Positions 23-48 are excised as a propeptide; that stretch reads DYPRDEQVYRAVRLRDAMQKSKGSGS. 3 disulfide bridges follow: Cys49–Cys62, Cys56–Cys67, and Cys61–Cys75.

This sequence belongs to the conotoxin O1 superfamily. In terms of tissue distribution, expressed by the venom duct.

Its subcellular location is the secreted. This chain is Conotoxin Lt6.1, found in Conus litteratus (Lettered cone).